Reading from the N-terminus, the 391-residue chain is Homocysteine-responsive endoplasmic reticulum-resident ubiquitin-like domain member 1 protein (391 aa).

At Met-1 the chain carries N-acetylmethionine. Topologically, residues 1–263 (MESETEPEPV…VEEDDEINRD (263 aa)) are cytoplasmic. The 63-residue stretch at 10–72 (VTLLVKSPNQ…LLDHQCLRDL (63 aa)) folds into the Ubiquitin-like domain. The disordered stretch occupies residues 100–126 (KVAESTEEPAGSNRGQYPEDSSSDGLR). Residues 112-124 (NRGQYPEDSSSDG) show a composition bias toward polar residues. The segment at 115-200 (QYPEDSSSDG…ASGAFVPPPS (86 aa)) is interaction with UBQLN1. The residue at position 135 (Ser-135) is a Phosphoserine. The interval 170-190 (LSWFQQIYARQYYMQYLAATA) is interaction with SYVN1. A helical transmembrane segment spans residues 264 to 284 (WLDWTYSAATFSVFLSILYFY). Residues 285–289 (SSLSR) are Lumenal-facing. Residues 290 to 310 (FLMVMGATVVMYLHHVGWFPF) form a helical membrane-spanning segment. Topologically, residues 311–391 (RPRPVQNFPN…LPEGPPAIAN (81 aa)) are cytoplasmic. Residues 318-359 (FPNDGPPPDVVNQDPNNNLQEGTDPETEDPNHLPPDRDVLDG) are disordered. Residues 346 to 357 (DPNHLPPDRDVL) show a composition bias toward basic and acidic residues.

As to quaternary structure, interacts with PSEN1 and PSEN2. Interacts with UBXN6. Interacts with UBQLN1, UBQLN2 and UBQLN4. Component of the HRD1 complex, which comprises at least SYNV1/HRD1, FAM8A1, HERPUD1/HERP, OS9, SEL1L and UBE2J1. FAM8A1 binding to SYNV1 may promote recruitment of HERPUD1 to the HRD1 complex. As to expression, widely expressed; in the brain, expression seems to be restricted to neurons and vascular smooth muscle cells. Present in activated microglia in senile plaques in the brain of patients with Alzheimer disease.

It is found in the endoplasmic reticulum membrane. In terms of biological role, component of the endoplasmic reticulum quality control (ERQC) system also called ER-associated degradation (ERAD) involved in ubiquitin-dependent degradation of misfolded endoplasmic reticulum proteins. Could enhance presenilin-mediated amyloid-beta protein 40 generation. Binds to ubiquilins and this interaction is required for efficient degradation of CD3D via the ERAD pathway. This chain is Homocysteine-responsive endoplasmic reticulum-resident ubiquitin-like domain member 1 protein (HERPUD1), found in Homo sapiens (Human).